Reading from the N-terminus, the 297-residue chain is N-acetylneuraminate lyase (297 aa).

Aceneuramate contacts are provided by Ser-47 and Thr-48. Tyr-137 functions as the Proton donor in the catalytic mechanism. Catalysis depends on Lys-165, which acts as the Schiff-base intermediate with substrate. Thr-167, Gly-189, Asp-191, Glu-192, and Ser-208 together coordinate aceneuramate.

The protein belongs to the DapA family. NanA subfamily. Homotetramer.

The protein resides in the cytoplasm. The enzyme catalyses aceneuramate = aldehydo-N-acetyl-D-mannosamine + pyruvate. The protein operates within amino-sugar metabolism; N-acetylneuraminate degradation; D-fructose 6-phosphate from N-acetylneuraminate: step 1/5. Its function is as follows. Catalyzes the reversible aldol cleavage of N-acetylneuraminic acid (sialic acid; Neu5Ac) to form pyruvate and N-acetylmannosamine (ManNAc) via a Schiff base intermediate. In Shigella boydii serotype 4 (strain Sb227), this protein is N-acetylneuraminate lyase.